A 338-amino-acid polypeptide reads, in one-letter code: Probable G-protein coupled receptor 160 (338 aa).

Over 1-23 (MTALSSENCSFQYQLRQTNQPLD) the chain is Extracellular. N8 carries N-linked (GlcNAc...) asparagine glycosylation. A helical membrane pass occupies residues 24–44 (VNYLLFLIILGKILLNILTLG). Residues 45-58 (MRRKNTCQNFMEYF) lie on the Cytoplasmic side of the membrane. The chain crosses the membrane as a helical span at residues 59–79 (CISLAFVDLLLLVNISIILYF). The Extracellular portion of the chain corresponds to 80–93 (RDFVLLSIRFTKYH). Residues 94 to 114 (ICLFTQIISFTYGFLHYPVFL) traverse the membrane as a helical segment. The Cytoplasmic portion of the chain corresponds to 115 to 136 (TACIDYCLNFSKTTKLSFKCQK). Residues 137–157 (LFYFFTVILIWISVLAYVLGD) form a helical membrane-spanning segment. The Extracellular portion of the chain corresponds to 158–177 (PAIYQSLKAQNAYSRHCPFY). Residues 178-198 (VSIQSYWLSFFMVMILFVAFI) form a helical membrane-spanning segment. The Cytoplasmic portion of the chain corresponds to 199 to 244 (TCWEEVTTLVQAIRITSYMNETILYFPFSSHSSYTVRSKKIFLSKL). The helical transmembrane segment at 245-265 (IVCFLSTWLPFVLLQVIIVLL) threads the bilayer. Over 266–268 (KVQ) the chain is Extracellular. A helical membrane pass occupies residues 269 to 289 (IPAYIEMNIPWLYFVNSFLIA). At 290–338 (TVYWFNCHKLNLKDIGLPLDPFVNWKCCFIPLTIPNLEQIEKPISIMIC) the chain is on the cytoplasmic side.

It belongs to the G-protein coupled receptor 1 family.

Its subcellular location is the cell membrane. Orphan receptor. This is Probable G-protein coupled receptor 160 (GPR160) from Homo sapiens (Human).